The sequence spans 947 residues: DNA mismatch repair protein MutS (947 aa).

620–627 (GPNMSGKS) provides a ligand contact to ATP.

This sequence belongs to the DNA mismatch repair MutS family.

Functionally, this protein is involved in the repair of mismatches in DNA. It is possible that it carries out the mismatch recognition step. This protein has a weak ATPase activity. The chain is DNA mismatch repair protein MutS from Clostridioides difficile (strain 630) (Peptoclostridium difficile).